A 345-amino-acid polypeptide reads, in one-letter code: tRNA N6-adenosine threonylcarbamoyltransferase (345 aa).

Positions 111 and 115 each coordinate Fe cation. Substrate-binding positions include 134 to 138, D167, G180, D184, and N278; that span reads LVSGG. A Fe cation-binding site is contributed by D306.

The protein belongs to the KAE1 / TsaD family. Fe(2+) is required as a cofactor.

The protein resides in the cytoplasm. It carries out the reaction L-threonylcarbamoyladenylate + adenosine(37) in tRNA = N(6)-L-threonylcarbamoyladenosine(37) in tRNA + AMP + H(+). Required for the formation of a threonylcarbamoyl group on adenosine at position 37 (t(6)A37) in tRNAs that read codons beginning with adenine. Is involved in the transfer of the threonylcarbamoyl moiety of threonylcarbamoyl-AMP (TC-AMP) to the N6 group of A37, together with TsaE and TsaB. TsaD likely plays a direct catalytic role in this reaction. This Cyanothece sp. (strain PCC 7425 / ATCC 29141) protein is tRNA N6-adenosine threonylcarbamoyltransferase.